The primary structure comprises 414 residues: 2,3-bisphosphoglycerate-independent phosphoglycerate mutase (414 aa).

It belongs to the BPG-independent phosphoglycerate mutase family. A-PGAM subfamily.

The enzyme catalyses (2R)-2-phosphoglycerate = (2R)-3-phosphoglycerate. The protein operates within carbohydrate degradation; glycolysis; pyruvate from D-glyceraldehyde 3-phosphate: step 3/5. Catalyzes the interconversion of 2-phosphoglycerate and 3-phosphoglycerate. The sequence is that of 2,3-bisphosphoglycerate-independent phosphoglycerate mutase from Saccharolobus solfataricus (strain ATCC 35092 / DSM 1617 / JCM 11322 / P2) (Sulfolobus solfataricus).